Consider the following 460-residue polypeptide: Biphenyl 2,3-dioxygenase subunit alpha (460 aa).

One can recognise a Rieske domain in the interval 56–165; the sequence is WLLMGHETQI…VETYKGLIFA (110 aa). [2Fe-2S] cluster contacts are provided by Cys98, His100, Cys118, and His121. A substrate-binding site is contributed by 217–230; the sequence is QFCSDMYHAGTTSH. Fe cation-binding residues include His224, His230, and Asp378.

It belongs to the bacterial ring-hydroxylating dioxygenase alpha subunit family. In terms of assembly, heterohexamer consisting of three BphA1 subunits and three BphA2 subunits. The multicomponent biphenyl dioxygenase system is composed of a ferredoxin reductase (BphA4), a ferredoxin (BphA3), and a terminal oxygenase (BphA1A2). Requires [2Fe-2S] cluster as cofactor. Fe cation serves as cofactor.

It carries out the reaction biphenyl + NADH + O2 + H(+) = (2R,3S)-3-phenylcyclohexa-3,5-diene-1,2-diol + NAD(+). Its pathway is xenobiotic degradation; biphenyl degradation; 2-hydroxy-2,4-pentadienoate and benzoate from biphenyl: step 1/4. In terms of biological role, part of the oxygenase component of the biphenyl dioxygenase system that catalyzes the stereospecific dihydroxylation of the aromatic ring of biphenyl, yielding a dihydrodiol compound. Is essential for biphenyl degradation and growth of Rhodococcus sp. strain RHA1 on biphenyl as the sole source of carbon and energy. Can also use naphtalene and 4-chlorobiphenyl (4-CB) as substrates, as well as some polychlorinated biphenyls (PCB) such as 2,2'-dichlorobiphenyl, 2,3-dichlorobiphenyl and 2,5,2'-trichlorobiphenyl. Exhibits weak activity toward dibenzofuran and dibenzo-p-dioxin. Electrons are transferred from NADH to the [2Fe-2S] cluster in BphA1 via FAD of BphA4 and [2Fe-2S] cluster of BphA3. In Rhodococcus jostii (strain RHA1), this protein is Biphenyl 2,3-dioxygenase subunit alpha.